The following is a 1187-amino-acid chain: MGRIFEYFVVCGLGPEMRTVDGDLGFHGMQTFYLPALLDQFPPTDQSPYPAPPPQLPTCVLPAGVEFHSSGFVSSDPASFPRSYPIVLTEGDGSKIFVSCIAFRDRVCEDIIEAYRLPPNTYADKCICLVSHAPNFRVLRNSLEEIFVLCFSSEGSCKPLWDIIAYMVSNVPLPTPGKDRVLFAVENCLLSVEAPPEDSLPQADISLQPLVQCLDVDNLIKLFTSVLVERRILIRSNKYSLLTLVSESICHLIYPFRWLQVYIPLLFFSGVDYIDAPTPYMMGLHSDVDTSNLAMDGVVVVDLDINQITTSEEIPQIPEPEFSTLRNDILKLLHPNVVAIDQLKGFGNSVEQCPKSLSKPWGEDHDLQLRVIFLKCFASILGGYRNFIENKVFSTDAFLKRRSRSTNQPPEPMLVQFLGSFAFLDYLERRLSSDEKSTNLLEKLQDAVGRGQDAMSILPKSSMEPEIITIAEPEVEESATRYTYDRFPASVRSEEQEEKRKQILAAASGALESNGRHPPSSPPGKNTKEDNFSSMERAAERERMVLDIQVKLQGLWLRLLKLGSDEDPLSSFEYGTILALIESDAEGIGGSGFIECIREHLYSGWHGQLSEEQFIAVKELLKMAVGRAASRSDLSTVRDALEVSAEMFKKDANNVSDYVQRHLISIPIWEELRFWEGYFEYLMEQPANESVNYATLVTARLIIVASHMAGLGLPDTEAWNMIETIAEKQKLGYKLLIKLRGFLSHVQQLRVGYWGASSFKQQAISAGLPSPRPKDVSVSDETQQPSEASGRSWVQSMFSRDTASRANSFSRVRKWVSDNASSDITAAAQKKIQTNVRVLKGHGGAVTALHSVTRREVCDLVGDREDAGFFISGSTDCLVKIWDPSLRGSELRATLKGHTGTVRAISSDRGKIVSGSDDLSVIVWDKQTTQLLEELKGHDSQVSCVKMLSGERVLTAAHDGTVKMWDVRTDMCVATVGRCSSAILSLEYDDSTGILAAAGRDTVANIWDIRSGKQMHKLKGHTKWIRSIRMVEDTLITGSDDWTARVWSVSRGSCDAVLACHAGPVQSVEYSPFDKGIITGSADGLLRFWENDEGGIKCVKNITLHSSSILSINAGENWLGIGAADNSMSLFHRPSNAGTKVSGWQLYRVPQRTAAVVRCVASDLERKRICSGGRNGVLRLWDATINI.

Residues 19-179 enclose the uDENN domain; the sequence is TVDGDLGFHG…NVPLPTPGKD (161 aa). Positions 199 to 330 constitute a cDENN domain; that stretch reads SLPQADISLQ…EFSTLRNDIL (132 aa). One can recognise a dDENN domain in the interval 332-437; it reads LLHPNVVAID…ERRLSSDEKS (106 aa). Disordered stretches follow at residues 508-536 and 765-793; these read SGAL…SSME and SAGL…GRSW. Basic and acidic residues predominate over residues 526-536; the sequence is NTKEDNFSSME. Residues 779–793 are compositionally biased toward polar residues; it reads SDETQQPSEASGRSW. WD repeat units follow at residues 841–892, 897–934, 937–975, 978–1017, 1020–1057, 1060–1099, 1104–1141, and 1152–1187; these read GHGG…SELR, GHTG…LLEE, GHDS…CVAT, RCSS…QMHK, GHTK…CDAV, CHAG…IKCV, LHSS…GTKV, and RTAA…TINI.

Interacts with FLS2. Expressed in roots, rosette and cauline leaves, buds and flowers.

Its subcellular location is the cell membrane. The protein localises to the cytoplasmic vesicle. It localises to the clathrin-coated vesicle. Its function is as follows. Involved in growth and development through its role in cytokinesis and polarized cell expansion. Required for plasma membrane internalization. May function in clathrin-mediated membrane trafficking, including plasma membrane endocytosis, essential to both cytokinesis and cell expansion. Acts as a negative regulator of basal resistance against bacteria. This Arabidopsis thaliana (Mouse-ear cress) protein is DENN domain and WD repeat-containing protein SCD1.